A 263-amino-acid chain; its full sequence is Thiazole synthase (263 aa).

Lys-102 functions as the Schiff-base intermediate with DXP in the catalytic mechanism. 1-deoxy-D-xylulose 5-phosphate is bound by residues Gly-164, 190 to 191, and 212 to 213; these read AG and NT.

The protein belongs to the ThiG family. In terms of assembly, homotetramer. Forms heterodimers with either ThiH or ThiS.

It is found in the cytoplasm. It carries out the reaction [ThiS sulfur-carrier protein]-C-terminal-Gly-aminoethanethioate + 2-iminoacetate + 1-deoxy-D-xylulose 5-phosphate = [ThiS sulfur-carrier protein]-C-terminal Gly-Gly + 2-[(2R,5Z)-2-carboxy-4-methylthiazol-5(2H)-ylidene]ethyl phosphate + 2 H2O + H(+). It functions in the pathway cofactor biosynthesis; thiamine diphosphate biosynthesis. Its function is as follows. Catalyzes the rearrangement of 1-deoxy-D-xylulose 5-phosphate (DXP) to produce the thiazole phosphate moiety of thiamine. Sulfur is provided by the thiocarboxylate moiety of the carrier protein ThiS. In vitro, sulfur can be provided by H(2)S. This chain is Thiazole synthase, found in Helicobacter hepaticus (strain ATCC 51449 / 3B1).